The chain runs to 587 residues: V-type proton ATPase catalytic subunit A (587 aa).

Gly243–Thr250 serves as a coordination point for ATP.

Belongs to the ATPase alpha/beta chains family. In terms of assembly, V-ATPase is a heteromultimeric enzyme composed of a peripheral catalytic V1 complex (main components: subunits A, B, C, D, E, and F) attached to an integral membrane V0 proton pore complex (main component: the proteolipid protein).

It carries out the reaction ATP + H2O + 4 H(+)(in) = ADP + phosphate + 5 H(+)(out). Its function is as follows. Catalytic subunit of the peripheral V1 complex of vacuolar ATPase. V-ATPase vacuolar ATPase is responsible for acidifying a variety of intracellular compartments in eukaryotic cells. This chain is V-type proton ATPase catalytic subunit A, found in Cyanidium caldarium (Red alga).